The primary structure comprises 430 residues: UDP-N-acetylglucosamine 1-carboxyvinyltransferase (430 aa).

Lys-22 to Asn-23 is a phosphoenolpyruvate binding site. Arg-102 contacts UDP-N-acetyl-alpha-D-glucosamine. Catalysis depends on Cys-126, which acts as the Proton donor. At Cys-126 the chain carries 2-(S-cysteinyl)pyruvic acid O-phosphothioketal. UDP-N-acetyl-alpha-D-glucosamine-binding positions include Arg-131–Leu-135, Lys-172–Val-175, Asp-317, and Ile-339.

Belongs to the EPSP synthase family. MurA subfamily.

Its subcellular location is the cytoplasm. The enzyme catalyses phosphoenolpyruvate + UDP-N-acetyl-alpha-D-glucosamine = UDP-N-acetyl-3-O-(1-carboxyvinyl)-alpha-D-glucosamine + phosphate. Its pathway is cell wall biogenesis; peptidoglycan biosynthesis. Functionally, cell wall formation. Adds enolpyruvyl to UDP-N-acetylglucosamine. In Rhizobium etli (strain CIAT 652), this protein is UDP-N-acetylglucosamine 1-carboxyvinyltransferase.